The following is a 76-amino-acid chain: Defensin-like protein 125 (76 aa).

The signal sequence occupies residues 1-25; the sequence is MTKAITLAIFMVVLVLGMVTKETQG. Disulfide bonds link cysteine 30–cysteine 74, cysteine 41–cysteine 60, cysteine 46–cysteine 68, and cysteine 50–cysteine 70.

The protein belongs to the DEFL family.

The protein resides in the secreted. In Arabidopsis thaliana (Mouse-ear cress), this protein is Defensin-like protein 125 (LCR54).